The following is a 123-amino-acid chain: MATINQLVRKPRKRKVQKSDVPALQACPQRRGVCTRVYTTTPKKPNSALRKVCRVRLTNGFEVTSYIGGEGHNLQEHSVVLIRGGRVKDLPGVRYHTVRGSLDTSGVSDRKQGRSKYGTKRPK.

Aspartate 89 carries the 3-methylthioaspartic acid modification. The segment at 100-123 (GSLDTSGVSDRKQGRSKYGTKRPK) is disordered. A compositionally biased stretch (basic residues) spans 113 to 123 (GRSKYGTKRPK).

It belongs to the universal ribosomal protein uS12 family. As to quaternary structure, part of the 30S ribosomal subunit. Contacts proteins S8 and S17. May interact with IF1 in the 30S initiation complex.

Its function is as follows. With S4 and S5 plays an important role in translational accuracy. In terms of biological role, interacts with and stabilizes bases of the 16S rRNA that are involved in tRNA selection in the A site and with the mRNA backbone. Located at the interface of the 30S and 50S subunits, it traverses the body of the 30S subunit contacting proteins on the other side and probably holding the rRNA structure together. The combined cluster of proteins S8, S12 and S17 appears to hold together the shoulder and platform of the 30S subunit. The sequence is that of Small ribosomal subunit protein uS12 from Saccharophagus degradans (strain 2-40 / ATCC 43961 / DSM 17024).